We begin with the raw amino-acid sequence, 163 residues long: Gas vesicle protein H2 (163 aa).

Positions 57-92 are disordered; sequence LGSDARSPSTPAGNADDAGDAETAHIETRASDDSDD. The span at 78 to 88 shows a compositional bias: basic and acidic residues; it reads ETAHIETRASD.

The protein belongs to the gas vesicle GvpH family. In terms of assembly, gvpF to GvpM interact with each other in vitro, and may form multi-subunit complex(es). Interacts with GvpC. Might interact with GvpA.

It localises to the gas vesicle. The protein resides in the cytoplasm. Functionally, a minor component of the gas vesicle, also found in soluble extracts. Proteins GvpF to GvpM might be involved in nucleating gas vesicle formation. Gas vesicles are hollow, gas filled proteinaceous nanostructures found in several microbial planktonic microorganisms. They allow positioning of halobacteria at the optimal depth for growth in the poorly aerated, shallow brine pools of their habitat. Expression of 2 c-vac DNA fragments containing 2 divergently transcribed regions (gvpE-gvpF-gvpG-gvpH-gvpI-gvpJ-gvpK-gvpL-gvpM and gvpA-gvpC-gvpN-gvpO) allows H.volcanii to produce gas vesicles. This Halobacterium salinarum (strain ATCC 700922 / JCM 11081 / NRC-1) (Halobacterium halobium) protein is Gas vesicle protein H2.